The primary structure comprises 116 residues: NADPH-dependent 7-cyano-7-deazaguanine reductase (116 aa).

C31 acts as the Thioimide intermediate in catalysis. Residue D38 is the Proton donor of the active site. Substrate is bound by residues 53 to 55 and 72 to 73; these read VEL and YE.

This sequence belongs to the GTP cyclohydrolase I family. QueF type 1 subfamily.

Its subcellular location is the cytoplasm. It carries out the reaction 7-aminomethyl-7-carbaguanine + 2 NADP(+) = 7-cyano-7-deazaguanine + 2 NADPH + 3 H(+). Its pathway is tRNA modification; tRNA-queuosine biosynthesis. Functionally, catalyzes the NADPH-dependent reduction of 7-cyano-7-deazaguanine (preQ0) to 7-aminomethyl-7-deazaguanine (preQ1). This chain is NADPH-dependent 7-cyano-7-deazaguanine reductase, found in Chlorobium phaeobacteroides (strain DSM 266 / SMG 266 / 2430).